The chain runs to 95 residues: DNA-directed RNA polymerase subunit Rpo6 (95 aa).

This sequence belongs to the archaeal Rpo6/eukaryotic RPB6 RNA polymerase subunit family. As to quaternary structure, part of the RNA polymerase complex.

It is found in the cytoplasm. The catalysed reaction is RNA(n) + a ribonucleoside 5'-triphosphate = RNA(n+1) + diphosphate. In terms of biological role, DNA-dependent RNA polymerase (RNAP) catalyzes the transcription of DNA into RNA using the four ribonucleoside triphosphates as substrates. In Saccharolobus islandicus (strain M.16.27) (Sulfolobus islandicus), this protein is DNA-directed RNA polymerase subunit Rpo6.